Reading from the N-terminus, the 338-residue chain is Nickel transporter NixA (338 aa).

The next 8 membrane-spanning stretches (helical) occupy residues 11–31 (WLPY…FLWI), 37–57 (HILF…AFDA), 79–99 (GVGF…AVFL), 127–147 (FFLV…INLF), 187–207 (VLPL…IALL), 217–237 (AISF…MSLL), 266–286 (ITAI…LQIL), and 307–327 (YLGY…SLIW).

It belongs to the NiCoT transporter (TC 2.A.52) family.

The protein localises to the cell membrane. Secondary nickel transporter. Required for full urease activity. The chain is Nickel transporter NixA from Staphylococcus aureus (strain NCTC 8325 / PS 47).